The sequence spans 47 residues: Protein YtiD (47 aa).

The protein is Protein YtiD (ytiD) of Escherichia coli (strain K12).